The sequence spans 458 residues: F-box/LRR-repeat protein At5g02910 (458 aa).

Residues Met-10–Asp-56 form the F-box domain. LRR repeat units lie at residues Cys-57–Thr-84, Leu-86–Ser-112, Lys-133–Ser-161, Asn-162–Tyr-187, Cys-226–Ile-251, Thr-260–Gly-285, Lys-325–Asp-353, and Glu-389–Leu-414.

The chain is F-box/LRR-repeat protein At5g02910 from Arabidopsis thaliana (Mouse-ear cress).